Here is a 37-residue protein sequence, read N- to C-terminus: Potassium channel toxin alpha-KTx 2.14 (37 aa).

3 cysteine pairs are disulfide-bonded: Cys7/Cys28, Cys13/Cys33, and Cys17/Cys35.

This sequence belongs to the short scorpion toxin superfamily. Potassium channel inhibitor family. Alpha-KTx 02 subfamily. As to expression, expressed by the venom gland.

The protein resides in the secreted. Functionally, reversibly blocks hKv1.1/KCNA1 (50% inhibition of current at 1 uM). Seems not to be voltage-dependent. In Heteroctenus garridoi (Cuban scorpion), this protein is Potassium channel toxin alpha-KTx 2.14.